A 399-amino-acid polypeptide reads, in one-letter code: Succinate--CoA ligase [ADP-forming] subunit beta (399 aa).

Positions 9 to 254 (KAVLAEFGVA…ESEEDPKEIE (246 aa)) constitute an ATP-grasp domain. ATP contacts are provided by residues Lys46, 53 to 55 (GRG), Glu109, Ala112, and Glu117. Residues Asn209 and Asp223 each contribute to the Mg(2+) site. Residues Asn274 and 331–333 (GIM) each bind substrate.

Belongs to the succinate/malate CoA ligase beta subunit family. Heterotetramer of two alpha and two beta subunits. It depends on Mg(2+) as a cofactor.

The catalysed reaction is succinate + ATP + CoA = succinyl-CoA + ADP + phosphate. The enzyme catalyses GTP + succinate + CoA = succinyl-CoA + GDP + phosphate. It participates in carbohydrate metabolism; tricarboxylic acid cycle; succinate from succinyl-CoA (ligase route): step 1/1. In terms of biological role, succinyl-CoA synthetase functions in the citric acid cycle (TCA), coupling the hydrolysis of succinyl-CoA to the synthesis of either ATP or GTP and thus represents the only step of substrate-level phosphorylation in the TCA. The beta subunit provides nucleotide specificity of the enzyme and binds the substrate succinate, while the binding sites for coenzyme A and phosphate are found in the alpha subunit. The chain is Succinate--CoA ligase [ADP-forming] subunit beta from Phenylobacterium zucineum (strain HLK1).